The sequence spans 524 residues: Cytokinin dehydrogenase 4 (524 aa).

The first 26 residues, 1 to 26 (MTNTLCLSLITLITLFISLTPTLIKS), serve as a signal peptide directing secretion. 2 N-linked (GlcNAc...) asparagine glycosylation sites follow: Asn-39 and Asn-58. The FAD-binding PCMH-type domain maps to 60–249 (TDENPGAVLC…TRARIALDHA (190 aa)). Residues Ala-104, Gly-106, and Gly-108 each contribute to the FAD site. Residue His-109 is modified to Pros-8alpha-FAD histidine. FAD is bound by residues Ser-110 and Gln-114. Asn-124 is a glycosylation site (N-linked (GlcNAc...) asparagine). FAD is bound by residues Asp-173, Ser-178, Ser-184, Ile-188, and Ile-239. Asn-411 carries an N-linked (GlcNAc...) asparagine glycan. FAD is bound by residues Tyr-482, Ser-517, and Gln-520.

The protein belongs to the oxygen-dependent FAD-linked oxidoreductase family. FAD serves as cofactor. Expressed in trichomes and in developing stomata of young growing leaves. Strong expression in stipules and in the root cap, but not detected in the root meristem.

Its subcellular location is the secreted. The protein localises to the extracellular space. It carries out the reaction N(6)-dimethylallyladenine + A + H2O = 3-methyl-2-butenal + adenine + AH2. Its function is as follows. Catalyzes the oxidation of cytokinins, a family of N(6)-substituted adenine derivatives that are plant hormones, where the substituent is an isopentenyl group. The polypeptide is Cytokinin dehydrogenase 4 (CKX4) (Arabidopsis thaliana (Mouse-ear cress)).